Reading from the N-terminus, the 288-residue chain is PAK4-inhibitor inka2 (288 aa).

Positions D159 to E196 are inka box.

This sequence belongs to the INKA family.

The protein localises to the nucleus. Inhibitor of the serine/threonine-protein kinase pak4/pak5. Acts by binding pak4/pak5 in a substrate-like manner, inhibiting the protein kinase activity. The chain is PAK4-inhibitor inka2 from Danio rerio (Zebrafish).